Consider the following 252-residue polypeptide: Triosephosphate isomerase (252 aa).

Position 9–11 (9–11 (NWK)) interacts with substrate. The active-site Electrophile is the His96. The active-site Proton acceptor is Glu168. Substrate contacts are provided by residues Gly174, Ser214, and 235–236 (GG).

It belongs to the triosephosphate isomerase family. Homodimer.

The protein resides in the cytoplasm. It carries out the reaction D-glyceraldehyde 3-phosphate = dihydroxyacetone phosphate. The protein operates within carbohydrate biosynthesis; gluconeogenesis. Its pathway is carbohydrate degradation; glycolysis; D-glyceraldehyde 3-phosphate from glycerone phosphate: step 1/1. Involved in the gluconeogenesis. Catalyzes stereospecifically the conversion of dihydroxyacetone phosphate (DHAP) to D-glyceraldehyde-3-phosphate (G3P). The polypeptide is Triosephosphate isomerase (Chloroherpeton thalassium (strain ATCC 35110 / GB-78)).